Here is a 1249-residue protein sequence, read N- to C-terminus: AMB antimetabolite synthetase AmbB (1249 aa).

Positions 245–633 are adenylation; that stretch reads FEAQARRTPQ…LGRLDDQVKF (389 aa). The disordered stretch occupies residues 716–735; that stretch reads IDRKALPRPQATGAEPQALP. The 76-residue stretch at 734-809 folds into the Carrier domain; that stretch reads LPSDPLEQAL…ALLELLRQAA (76 aa). At serine 768 the chain carries O-(pantetheine 4'-phosphoryl)serine. Residues 823-1150 form a condensation region; sequence GLSLAERRLW…CVTQALRQRG (328 aa).

The protein belongs to the NRP synthetase family. Pantetheine 4'-phosphate serves as cofactor.

It catalyses the reaction holo-[peptidyl-carrier protein] + L-alanine + ATP = L-alanyl-[peptidyl-carrier protein] + AMP + diphosphate. Its function is as follows. Involved in the biosynthesis of the antimetabolite L-2-amino-4-methoxy-trans-3-butenoic acid (AMB), a non-proteinogenic amino acid which is toxic for prokaryotes and eukaryotes. Adenylates L-alanine and loads it onto its peptidyl carrier domain via a thioester linkage to the phosphopanthetheine moiety. In addition, loads activated L-Ala in trans onto the second carrier domain of AmbE. Can also activate L-Ser, Gly and D-Ala, albeit to a lower extent. The condensation domain of AmbB probably condenses the activated L-Ala and the L-Glu loaded on AmbE to form a L-Glu-L-Ala dipeptide at the first carrier domain of AmbE. The sequence is that of AMB antimetabolite synthetase AmbB from Pseudomonas aeruginosa (strain ATCC 15692 / DSM 22644 / CIP 104116 / JCM 14847 / LMG 12228 / 1C / PRS 101 / PAO1).